A 310-amino-acid polypeptide reads, in one-letter code: Cysteine synthase (310 aa).

Lys46 carries the N6-(pyridoxal phosphate)lysine modification. Residues Asn76, 180-184 (GTGGT), and Ser268 each bind pyridoxal 5'-phosphate.

Belongs to the cysteine synthase/cystathionine beta-synthase family. In terms of assembly, homodimer. Requires pyridoxal 5'-phosphate as cofactor.

The catalysed reaction is O-acetyl-L-serine + hydrogen sulfide = L-cysteine + acetate. The protein operates within amino-acid biosynthesis; L-cysteine biosynthesis; L-cysteine from L-serine: step 2/2. The protein is Cysteine synthase (cysK) of Staphylococcus epidermidis (strain ATCC 35984 / DSM 28319 / BCRC 17069 / CCUG 31568 / BM 3577 / RP62A).